Consider the following 632-residue polypeptide: Nucleoside triphosphatase I (632 aa).

A Helicase ATP-binding domain is found at Phe42–Lys204. His55–Thr62 is an ATP binding site. Positions Asp141 to His144 match the DEXH box motif. The 166-residue stretch at Lys367–Lys532 folds into the Helicase C-terminal domain. The segment at Asp457–Phe524 is binding to the cap-specific mRNA (nucleoside-2'-O-)-methyltransferase.

It belongs to the helicase family. NPH I subfamily. Monomer. Interacts (via C-terminus) with RAP94 (via N-terminus). Interacts with the cap-specific mRNA (nucleoside-2'-O-)-methyltransferase.

Its subcellular location is the virion. It carries out the reaction a ribonucleoside 5'-triphosphate + H2O = a ribonucleoside 5'-diphosphate + phosphate + H(+). DNA-dependent ATPase required for providing the needed energy to achieve the termination of early transcripts. Acts in concert with the RAP94 subunit of the virion RNA polymerase and the capping enzyme/VTF to catalyze release of UUUUUNU-containing nascent RNA from the elongation complex. NPH-I must bind ssDNA in order to exhibit ATPase activity. This is Nucleoside triphosphatase I (NPH1) from Rabbit fibroma virus (strain Kasza) (RFV).